Reading from the N-terminus, the 270-residue chain is Phosphatidylinositol transfer protein alpha isoform (270 aa).

6 residues coordinate a 1,2-diacyl-sn-glycero-3-phospho-(1D-myo-inositol): threonine 58, lysine 60, glutamate 85, asparagine 89, threonine 96, and lysine 194. N6-acetyllysine is present on lysine 215. Residues 250 to 263 show a composition bias toward basic and acidic residues; that stretch reads TKRQLDEMRQKDPV. A disordered region spans residues 250-270; sequence TKRQLDEMRQKDPVKGMTADD.

It belongs to the PtdIns transfer protein family. PI transfer class I subfamily. Post-translationally, phosphorylated by PKC in a calcium and phosphatidylserine-dependent manner.

The protein localises to the cytoplasm. The protein resides in the nucleus. It catalyses the reaction a 1,2-diacyl-sn-glycero-3-phosphocholine(in) = a 1,2-diacyl-sn-glycero-3-phosphocholine(out). The catalysed reaction is a 1,2-diacyl-sn-glycero-3-phospho-(1D-myo-inositol)(in) = a 1,2-diacyl-sn-glycero-3-phospho-(1D-myo-inositol)(out). Catalyzes the transfer of phosphatidylinositol (PI) and phosphatidylcholine (PC) between membranes. Shows a preference for PI and PC containing shorter saturated or monosaturated acyl chains at the sn-1 and sn-2 positions. Preference order for PC is C16:1 &gt; C16:0 &gt; C18:1 &gt; C18:0 &gt; C20:4 and for PI is C16:1 &gt; C16:0 &gt; C18:1 &gt; C18:0 &gt; C20:4 &gt; C20:3. This is Phosphatidylinositol transfer protein alpha isoform (PITPNA) from Oryctolagus cuniculus (Rabbit).